The following is a 74-amino-acid chain: NADH dehydrogenase [ubiquinone] 1 alpha subcomplex assembly factor 8 (74 aa).

Positions L22–T69 constitute a CHCH domain. 2 short sequence motifs (cx9C motif) span residues C25 to C35 and C51 to C61. Disulfide bonds link C25-C61 and C35-C51.

Interacts with NDUFAF5.

It localises to the mitochondrion. Its function is as follows. Involved in the assembly of mitochondrial NADH:ubiquinone oxidoreductase complex (complex I, MT-ND1). Required to stabilize NDUFAF5. The chain is NADH dehydrogenase [ubiquinone] 1 alpha subcomplex assembly factor 8 from Mus musculus (Mouse).